We begin with the raw amino-acid sequence, 168 residues long: INO80 complex subunit 3 (168 aa).

The segment covering 115–129 (TNSTLSTPKSFHSPL) has biased composition (polar residues). A disordered region spans residues 115–168 (TNSTLSTPKSFHSPLQSRGISPSSAQSSAAVSSSRKQKRKRTSEGPSERRARKK). Over residues 130 to 148 (QSRGISPSSAQSSAAVSSS) the composition is skewed to low complexity. A compositionally biased stretch (basic and acidic residues) spans 156–168 (TSEGPSERRARKK).

In terms of assembly, component of the INO80 chromatin remodeling complex.

The protein resides in the nucleus. In terms of biological role, component of the INO80 complex which remodels chromatin by shifting nucleosomes and is involved in DNA repair. This chain is INO80 complex subunit 3 (iec3), found in Schizosaccharomyces pombe (strain 972 / ATCC 24843) (Fission yeast).